Reading from the N-terminus, the 305-residue chain is Putative monooxygenase p33MONOX (305 aa).

Positions 37–56 (LEDPAPMTPPPSDMGSVPWK) are disordered. T44 carries the post-translational modification Phosphothreonine. Positions 67-77 (LAKVEEGEASL) match the Flavin-containing monooxygenase motif motif. Disordered regions lie at residues 158 to 236 (QSGE…KYDS) and 259 to 305 (QANR…PTGF). Positions 169-183 (PASAQSTPSTTPHSS) are enriched in low complexity. T175 carries the phosphothreonine modification. Phosphoserine is present on residues S182 and S183. The segment covering 193-210 (TSGSSTALPGPNPSTMDS) has biased composition (polar residues).

The protein belongs to the P33MONOX family. Interacts with NELFB, NOL12 and PRNP. As to expression, down-regulated in the occipital lobe of an early stage Alzheimer disease patients.

The protein resides in the cytoplasm. Its function is as follows. Potential NADPH-dependent oxidoreductase. May be involved in the regulation of neuronal survival, differentiation and axonal outgrowth. The protein is Putative monooxygenase p33MONOX (KIAA1191) of Homo sapiens (Human).